The following is a 286-amino-acid chain: ATP synthase gamma chain (286 aa).

This sequence belongs to the ATPase gamma chain family. As to quaternary structure, F-type ATPases have 2 components, CF(1) - the catalytic core - and CF(0) - the membrane proton channel. CF(1) has five subunits: alpha(3), beta(3), gamma(1), delta(1), epsilon(1). CF(0) has three main subunits: a, b and c.

Its subcellular location is the cell membrane. Produces ATP from ADP in the presence of a proton gradient across the membrane. The gamma chain is believed to be important in regulating ATPase activity and the flow of protons through the CF(0) complex. The sequence is that of ATP synthase gamma chain from Ureaplasma parvum serovar 3 (strain ATCC 27815 / 27 / NCTC 11736).